A 740-amino-acid chain; its full sequence is ATP-dependent RNA helicase DDX1 (740 aa).

The necessary for interaction with HNRNPK stretch occupies residues 1–295 (MAAFSEMGVM…APKALIVEPS (295 aa)). The interaction with dsRNA stretch occupies residues 1–448 (MAAFSEMGVM…DTVHHVVVPV (448 aa)). The interval 1-525 (MAAFSEMGVM…KIDCDNLEQY (525 aa)) is necessary for interaction with RELA. The Helicase ATP-binding domain occupies 2–428 (AAFSEMGVMP…SEKIMHFPTW (427 aa)). 46-53 (AETGSGKT) serves as a coordination point for ATP. A B30.2/SPRY domain is found at 70 to 247 (DQQEGKKGKA…LKFNFGEEEF (178 aa)). Residues Lys239 and Lys268 each carry the N6-acetyllysine modification. N6-acetyllysine; alternate is present on Lys281. Residue Lys281 forms a Glycyl lysine isopeptide (Lys-Gly) (interchain with G-Cter in SUMO2); alternate linkage. Positions 370–373 (DEAD) match the DEAD box motif. At Ser481 the chain carries Phosphoserine. The Helicase C-terminal domain occupies 493 to 681 (KGEYAVRAIK…QVEPDIKVPV (189 aa)). Positions 525–740 (YFMQQGGGPD…YLPNQLFRTF (216 aa)) are necessary for interaction with HNRNPK.

It belongs to the DEAD box helicase family. DDX1 subfamily. As to quaternary structure, found in a multi-helicase-TICAM1 complex at least composed of DHX36, DDX1, DDX21 and TICAM1; this complex exists in resting cells with or without poly(I:C) RNA ligand stimulation. Interacts with DHX36. Interacts (via B30.2/SPRY domain) with DDX21 (via N-terminus); this interaction serves as bridges to TICAM1. Interacts with FAM98A (via N- and C-terminus). Interacts with PHF5A (via C-terminus). Interacts with MBNL1. Interacts with CSTF2. Interacts with HNRNPK. Interacts with ATM. Interacts with RELA (via C-terminus). Component of the tRNA-splicing ligase complex. Interacts with PQBP1. Interacts with ERCC6. Phosphorylated by ATM kinase; phosphorylation is increased in response to ionizing radiation (IR).

The protein resides in the nucleus. The protein localises to the cytoplasm. It is found in the cytoplasmic granule. It localises to the cytosol. Its subcellular location is the mitochondrion. The enzyme catalyses ATP + H2O = ADP + phosphate + H(+). In terms of biological role, acts as an ATP-dependent RNA helicase, able to unwind both RNA-RNA and RNA-DNA duplexes. Possesses 5' single-stranded RNA overhang nuclease activity. Possesses ATPase activity on various RNA, but not DNA polynucleotides. May play a role in RNA clearance at DNA double-strand breaks (DSBs), thereby facilitating the template-guided repair of transcriptionally active regions of the genome. Together with RELA, acts as a coactivator to enhance NF-kappa-B-mediated transcriptional activation. Acts as a positive transcriptional regulator of cyclin CCND2 expression. Binds to the cyclin CCND2 promoter region. Associates with chromatin at the NF-kappa-B promoter region via association with RELA. Binds to poly(A) RNA. May be involved in 3'-end cleavage and polyadenylation of pre-mRNAs. Component of the tRNA-splicing ligase complex required to facilitate the enzymatic turnover of catalytic subunit RTCB: together with archease (ZBTB8OS), acts by facilitating the guanylylation of RTCB, a key intermediate step in tRNA ligation. Component of a multi-helicase-TICAM1 complex that acts as a cytoplasmic sensor of viral double-stranded RNA (dsRNA) and plays a role in the activation of a cascade of antiviral responses including the induction of pro-inflammatory cytokines via the adapter molecule TICAM1. Specifically binds (via helicase ATP-binding domain) on both short and long poly(I:C) dsRNA. The sequence is that of ATP-dependent RNA helicase DDX1 (Ddx1) from Rattus norvegicus (Rat).